The sequence spans 505 residues: Light-independent protochlorophyllide reductase subunit B (505 aa).

[4Fe-4S] cluster is bound at residue D36. D291 serves as the catalytic Proton donor. Position 426-427 (426-427 (GM)) interacts with substrate.

Belongs to the ChlB/BchB/BchZ family. As to quaternary structure, protochlorophyllide reductase is composed of three subunits; ChlL, ChlN and ChlB. Forms a heterotetramer of two ChlB and two ChlN subunits. [4Fe-4S] cluster is required as a cofactor.

It catalyses the reaction chlorophyllide a + oxidized 2[4Fe-4S]-[ferredoxin] + 2 ADP + 2 phosphate = protochlorophyllide a + reduced 2[4Fe-4S]-[ferredoxin] + 2 ATP + 2 H2O. It participates in porphyrin-containing compound metabolism; chlorophyll biosynthesis (light-independent). In terms of biological role, component of the dark-operative protochlorophyllide reductase (DPOR) that uses Mg-ATP and reduced ferredoxin to reduce ring D of protochlorophyllide (Pchlide) to form chlorophyllide a (Chlide). This reaction is light-independent. The NB-protein (ChlN-ChlB) is the catalytic component of the complex. The sequence is that of Light-independent protochlorophyllide reductase subunit B from Gloeobacter violaceus (strain ATCC 29082 / PCC 7421).